The sequence spans 484 residues: Fumigaclavine B O-acetyltransferase ifgI (484 aa).

The protein belongs to the fumigaclavine B O-acetyltransferase family. In terms of assembly, monomer.

The enzyme catalyses fumigaclavine B + acetyl-CoA = fumigaclavine A + CoA. It functions in the pathway alkaloid biosynthesis; ergot alkaloid biosynthesis. Its function is as follows. Fumigaclavine B O-acetyltransferase; part of the gene cluster that mediates the biosynthesis of isofumigaclavines, fungal ergot alkaloids. The tryptophan dimethylallyltransferase ifgA catalyzes the first step of ergot alkaloid biosynthesis by condensing dimethylallyl diphosphate (DMAP) and tryptophan to form 4-dimethylallyl-L-tryptophan. The second step is catalyzed by the methyltransferase ifgB that methylates 4-dimethylallyl-L-tryptophan in the presence of S-adenosyl-L-methionine, resulting in the formation of N-methyl-dimethylallyl-L-tryptophan. The catalase ifgD and the FAD-dependent oxidoreductase ifgC then transform N-methyl-dimethylallyl-L-tryptophan to chanoclavine-I which is further oxidized by ifgE in the presence of NAD(+), resulting in the formation of chanoclavine-I aldehyde. The chanoclavine-I aldehyde reductases ifgG and/or fgaOx3 reduce chanoclavine-I aldehyde to dihydrochanoclavine-I aldehyde that spontaneously dehydrates to form 6,8-dimethyl-6,7-didehydroergoline. The festuclavine dehydrogenases ifgF1 and/or ifgF2 then catalyze the reduction of 6,8-dimethyl-6,7-didehydroergoline to form festuclavine. Hydrolysis of festuclavine by a yet undetermined cytochrome P450 monooxygenase (called ifgH) then leads to the formation of isofumigaclavine B which is in turn acetylated by ifgI to isofumigaclavine A. Penicillium roqueforti has interestingly at least two sets of genes for the consumption of chanoclavine-I aldehyde on three different loci, the OYEs ifgG/fgaOx3 and the festuclavine synthase homologs ifgF1/ifgF2. The reason for the duplication of these genes is unclear, probably to ensure the conversion of chanoclavine-I aldehyde by differential gene expression under various environmental conditions. This Penicillium roqueforti (strain FM164) protein is Fumigaclavine B O-acetyltransferase ifgI.